Consider the following 356-residue polypeptide: Homoserine O-acetyltransferase (356 aa).

One can recognise an AB hydrolase-1 domain in the interval 50-335 (NVILVCHALT…DEPYGHDAFL (286 aa)). The active-site Nucleophile is the serine 146. Arginine 215 is a substrate binding site. Residues aspartate 302 and histidine 331 contribute to the active site. Aspartate 332 lines the substrate pocket.

Belongs to the AB hydrolase superfamily. MetX family. Homodimer.

It is found in the cytoplasm. The catalysed reaction is L-homoserine + acetyl-CoA = O-acetyl-L-homoserine + CoA. It participates in amino-acid biosynthesis; L-methionine biosynthesis via de novo pathway; O-acetyl-L-homoserine from L-homoserine: step 1/1. Functionally, transfers an acetyl group from acetyl-CoA to L-homoserine, forming acetyl-L-homoserine. The polypeptide is Homoserine O-acetyltransferase (Chlorobaculum parvum (strain DSM 263 / NCIMB 8327) (Chlorobium vibrioforme subsp. thiosulfatophilum)).